We begin with the raw amino-acid sequence, 138 residues long: Putative pre-16S rRNA nuclease (138 aa).

Belongs to the YqgF nuclease family.

The protein localises to the cytoplasm. In terms of biological role, could be a nuclease involved in processing of the 5'-end of pre-16S rRNA. The chain is Putative pre-16S rRNA nuclease from Fusobacterium nucleatum subsp. nucleatum (strain ATCC 25586 / DSM 15643 / BCRC 10681 / CIP 101130 / JCM 8532 / KCTC 2640 / LMG 13131 / VPI 4355).